The sequence spans 396 residues: Cathepsin D (396 aa).

Residues 1-18 form the signal peptide; that stretch reads MKFLYLFLFAVFAWTSDA. Residues 19–61 constitute a propeptide, activation peptide; that stretch reads IVRIPLKKFRSIRRTLSDSGLNVEQLLAGTNSLQHNQGFPSSN. The region spanning 76-393 is the Peptidase A1 domain; the sequence is YYGEIGLGTP…DRESNRVGFA (318 aa). The active site involves Asp94. Cys107 and Cys114 are disulfide-bonded. N-linked (GlcNAc...) asparagine glycosylation occurs at Asn131. Cys272 and Cys276 are joined by a disulfide. Asp281 is a catalytic residue. Cys315 and Cys352 are joined by a disulfide.

The protein belongs to the peptidase A1 family. As to quaternary structure, monomer.

The protein localises to the lysosome. It catalyses the reaction Specificity similar to, but narrower than, that of pepsin A. Does not cleave the 4-Gln-|-His-5 bond in B chain of insulin.. Inhibited by pepstatin. Functionally, acid protease active in intracellular protein breakdown. The protein is Cathepsin D (ctsd) of Clupea harengus (Atlantic herring).